Reading from the N-terminus, the 325-residue chain is NADH-quinone oxidoreductase subunit H (325 aa).

The next 8 helical transmembrane spans lie at 11–31, 81–101, 114–134, 154–174, 186–206, 237–257, 265–285, and 304–324; these read ILIS…CGAF, AIFT…FAIV, IGIL…LFAG, LSYE…AGSF, VWNV…GVAV, FFVG…TLFF, LPPF…FILI, and VCLP…LYNA.

The protein belongs to the complex I subunit 1 family. In terms of assembly, NDH-1 is composed of 13 different subunits. Subunits NuoA, H, J, K, L, M, N constitute the membrane sector of the complex.

It localises to the cell inner membrane. It carries out the reaction a quinone + NADH + 5 H(+)(in) = a quinol + NAD(+) + 4 H(+)(out). Functionally, NDH-1 shuttles electrons from NADH, via FMN and iron-sulfur (Fe-S) centers, to quinones in the respiratory chain. The immediate electron acceptor for the enzyme in this species is believed to be ubiquinone. Couples the redox reaction to proton translocation (for every two electrons transferred, four hydrogen ions are translocated across the cytoplasmic membrane), and thus conserves the redox energy in a proton gradient. This subunit may bind ubiquinone. The polypeptide is NADH-quinone oxidoreductase subunit H (Yersinia enterocolitica serotype O:8 / biotype 1B (strain NCTC 13174 / 8081)).